A 344-amino-acid polypeptide reads, in one-letter code: 2,3,4,5-tetrahydropyridine-2,6-dicarboxylate N-succinyltransferase (344 aa).

Glu-205 is a Mg(2+) binding site. The Acyl-anhydride intermediate role is filled by Glu-221. Succinyl-CoA contacts are provided by residues Arg-223, Gly-238, Ser-241, Ala-264, Glu-279–Ala-280, Gly-287, Lys-304, and Arg-317–Ser-320.

Belongs to the type 2 tetrahydrodipicolinate N-succinyltransferase family. In terms of assembly, homotrimer.

It is found in the cytoplasm. The catalysed reaction is (S)-2,3,4,5-tetrahydrodipicolinate + succinyl-CoA + H2O = (S)-2-succinylamino-6-oxoheptanedioate + CoA. Its pathway is amino-acid biosynthesis; L-lysine biosynthesis via DAP pathway; LL-2,6-diaminopimelate from (S)-tetrahydrodipicolinate (succinylase route): step 1/3. Its function is as follows. Catalyzes the conversion of the cyclic tetrahydrodipicolinate (THDP) into the acyclic N-succinyl-L-2-amino-6-oxopimelate using succinyl-CoA. This is 2,3,4,5-tetrahydropyridine-2,6-dicarboxylate N-succinyltransferase from Pseudomonas paraeruginosa (strain DSM 24068 / PA7) (Pseudomonas aeruginosa (strain PA7)).